An 89-amino-acid chain; its full sequence is Small ribosomal subunit protein uS14 (89 aa).

Belongs to the universal ribosomal protein uS14 family. Part of the 30S ribosomal subunit. Contacts proteins S3 and S10.

Its function is as follows. Binds 16S rRNA, required for the assembly of 30S particles and may also be responsible for determining the conformation of the 16S rRNA at the A site. This is Small ribosomal subunit protein uS14 from Oenococcus oeni (strain ATCC BAA-331 / PSU-1).